The chain runs to 148 residues: Putative FAD-linked sulfhydryl oxidase 096R (148 aa).

In terms of domain architecture, ERV/ALR sulfhydryl oxidase spans 1–103 (MSIDPKLWGN…LAAKTVFQRY (103 aa)). Cysteine 48 and cysteine 51 are oxidised to a cystine. The chain crosses the membrane as a helical span at residues 122 to 142 (WSPWLTTALAVILVVVVAGIG).

It belongs to the IIV-6 347L family. The cofactor is FAD.

It localises to the membrane. It carries out the reaction 2 R'C(R)SH + O2 = R'C(R)S-S(R)CR' + H2O2. FAD-dependent sulfhydryl oxidase that catalyzes disulfide bond formation. This is Putative FAD-linked sulfhydryl oxidase 096R from Aedes vexans (Inland floodwater mosquito).